The sequence spans 60 residues: Small integral membrane protein 3 (60 aa).

A helical membrane pass occupies residues 20 to 40 (IWVIVLIILATIVIMTSLLLC).

The protein resides in the membrane. This chain is Small integral membrane protein 3 (SMIM3), found in Homo sapiens (Human).